The primary structure comprises 140 residues: uncharacterized protein (140 aa).

The VOC domain maps to 3–131 (RLDHIGIAVF…NGVLVELCEP (129 aa)). Residues His-6, Glu-53, His-77, and Glu-127 each coordinate a divalent metal cation.

This sequence belongs to the methylmalonyl-CoA epimerase family.

This is an uncharacterized protein from Bacillus subtilis (strain 168).